A 329-amino-acid polypeptide reads, in one-letter code: Quinolinate synthase (329 aa).

Iminosuccinate contacts are provided by His-44 and Ser-61. A [4Fe-4S] cluster-binding site is contributed by Cys-106. Iminosuccinate is bound by residues 132–134 (YIN) and Ser-149. Cys-192 serves as a coordination point for [4Fe-4S] cluster. Iminosuccinate is bound by residues 218-220 (HPE) and Thr-235. Cys-285 is a binding site for [4Fe-4S] cluster.

It belongs to the quinolinate synthase family. Type 2 subfamily. Requires [4Fe-4S] cluster as cofactor.

The protein resides in the plastid. It localises to the cyanelle. It catalyses the reaction iminosuccinate + dihydroxyacetone phosphate = quinolinate + phosphate + 2 H2O + H(+). It functions in the pathway cofactor biosynthesis; NAD(+) biosynthesis; quinolinate from iminoaspartate: step 1/1. Catalyzes the condensation of iminoaspartate with dihydroxyacetone phosphate to form quinolinate. The chain is Quinolinate synthase from Cyanophora paradoxa.